A 375-amino-acid polypeptide reads, in one-letter code: Growth/differentiation factor 8 (375 aa).

The N-terminal stretch at 1–23 (MQKLQLCVYIYLFMLIVAGPVDL) is a signal peptide. Residues 24–266 (NENSEQKENV…VTDTPKRSRR (243 aa)) constitute a propeptide that is removed on maturation. N-linked (GlcNAc...) asparagine glycosylation is present at Asn-71. Intrachain disulfides connect Cys-272/Cys-282, Cys-281/Cys-340, Cys-309/Cys-372, and Cys-313/Cys-374.

Belongs to the TGF-beta family. In terms of assembly, homodimer; disulfide-linked. Interacts with WFIKKN2, leading to inhibit its activity. Interacts with FSTL3. Post-translationally, synthesized as large precursor molecule that undergoes proteolytic cleavage to generate an N-terminal propeptide and a disulfide linked C-terminal dimer, which is the biologically active molecule. The circulating form consists of a latent complex of the C-terminal dimer and other proteins, including its propeptide, which maintain the C-terminal dimer in a latent, inactive state. Ligand activation requires additional cleavage of the prodomain by a tolloid-like metalloproteinase.

It localises to the secreted. Acts specifically as a negative regulator of skeletal muscle growth. This chain is Growth/differentiation factor 8 (MSTN), found in Pan paniscus (Pygmy chimpanzee).